The sequence spans 201 residues: Small ribosomal subunit protein uS4c (201 aa).

Residues 14-43 form a disordered region; it reads RLGALPGLTSKRPRAGSDLRNQSRPGKKSQ. In terms of domain architecture, S4 RNA-binding spans 89–169; that stretch reads MRLDNILFRL…LPKHLTFHTL (81 aa).

It belongs to the universal ribosomal protein uS4 family. As to quaternary structure, part of the 30S ribosomal subunit. Contacts protein S5. The interaction surface between S4 and S5 is involved in control of translational fidelity.

The protein localises to the plastid. Its subcellular location is the chloroplast. Functionally, one of the primary rRNA binding proteins, it binds directly to 16S rRNA where it nucleates assembly of the body of the 30S subunit. Its function is as follows. With S5 and S12 plays an important role in translational accuracy. The sequence is that of Small ribosomal subunit protein uS4c (rps4) from Gossypium hirsutum (Upland cotton).